The following is a 542-amino-acid chain: CTP synthase (542 aa).

The segment at Met-1 to Ile-265 is amidoligase domain. Ser-13 contacts CTP. Ser-13 contributes to the UTP binding site. Ser-14 to Ile-19 serves as a coordination point for ATP. Tyr-54 contacts L-glutamine. Asp-71 lines the ATP pocket. Positions 71 and 139 each coordinate Mg(2+). CTP contacts are provided by residues Asp-146–Glu-148, Lys-186–Gln-191, and Lys-222. UTP is bound by residues Lys-186–Gln-191 and Lys-222. The Glutamine amidotransferase type-1 domain maps to Thr-291–Leu-541. Gly-353 provides a ligand contact to L-glutamine. Cys-380 acts as the Nucleophile; for glutamine hydrolysis in catalysis. Residues Phe-381 to Gln-384, Glu-404, and Arg-469 each bind L-glutamine. Catalysis depends on residues His-514 and Glu-516.

The protein belongs to the CTP synthase family. Homotetramer.

It carries out the reaction UTP + L-glutamine + ATP + H2O = CTP + L-glutamate + ADP + phosphate + 2 H(+). The catalysed reaction is L-glutamine + H2O = L-glutamate + NH4(+). It catalyses the reaction UTP + NH4(+) + ATP = CTP + ADP + phosphate + 2 H(+). It functions in the pathway pyrimidine metabolism; CTP biosynthesis via de novo pathway; CTP from UDP: step 2/2. Allosterically activated by GTP, when glutamine is the substrate; GTP has no effect on the reaction when ammonia is the substrate. The allosteric effector GTP functions by stabilizing the protein conformation that binds the tetrahedral intermediate(s) formed during glutamine hydrolysis. Inhibited by the product CTP, via allosteric rather than competitive inhibition. Its function is as follows. Catalyzes the ATP-dependent amination of UTP to CTP with either L-glutamine or ammonia as the source of nitrogen. Regulates intracellular CTP levels through interactions with the four ribonucleotide triphosphates. This chain is CTP synthase, found in Brucella anthropi (strain ATCC 49188 / DSM 6882 / CCUG 24695 / JCM 21032 / LMG 3331 / NBRC 15819 / NCTC 12168 / Alc 37) (Ochrobactrum anthropi).